The primary structure comprises 206 residues: LexA repressor (206 aa).

Residues 28-48 (RAEIATRLGFKSANAAEEHLK) constitute a DNA-binding region (H-T-H motif). Catalysis depends on for autocatalytic cleavage activity residues serine 123 and lysine 160.

It belongs to the peptidase S24 family. Homodimer.

The enzyme catalyses Hydrolysis of Ala-|-Gly bond in repressor LexA.. Represses a number of genes involved in the response to DNA damage (SOS response), including recA and lexA. In the presence of single-stranded DNA, RecA interacts with LexA causing an autocatalytic cleavage which disrupts the DNA-binding part of LexA, leading to derepression of the SOS regulon and eventually DNA repair. This Shewanella oneidensis (strain ATCC 700550 / JCM 31522 / CIP 106686 / LMG 19005 / NCIMB 14063 / MR-1) protein is LexA repressor.